The following is a 90-amino-acid chain: Cell division protein CrgA (90 aa).

The disordered stretch occupies residues 1-26; it reads MPKAKVTKNSIAPVSSNPSANRTPVK. The span at 7–26 shows a compositional bias: polar residues; sequence TKNSIAPVSSNPSANRTPVK. 2 helical membrane passes run 38–58 and 69–89; these read VIMF…YLVG and AWNY…TMGW.

The protein belongs to the CrgA family.

It is found in the cell membrane. Its function is as follows. Involved in cell division. The polypeptide is Cell division protein CrgA (Corynebacterium efficiens (strain DSM 44549 / YS-314 / AJ 12310 / JCM 11189 / NBRC 100395)).